A 441-amino-acid polypeptide reads, in one-letter code: Vacuolar cation/proton exchanger 5 (441 aa).

Glycine 2 carries N-myristoyl glycine lipidation. Topologically, residues 2–69 (GCCKVPALIQ…PNNSVLQSFK (68 aa)) are cytoplasmic. S-palmitoyl cysteine attachment occurs at residues cysteine 3 and cysteine 4. A helical transmembrane segment spans residues 70–90 (IVILSNKLNLLLPFGPLAILL). The Extracellular segment spans residues 91 to 97 (HYLTDNK). Residues 98 to 118 (GWIFLLSLVGITPLAERLGYA) form a helical membrane-spanning segment. Over 119–129 (TEQLACYTGST) the chain is Cytoplasmic. The helical transmembrane segment at 130-150 (VGGLLNATFGNVTELIISIFA) threads the bilayer. Residues 139–174 (GNVTELIISIFALKSGMIRVVQLTLLGSILSNMLLV) are cation selection. Topologically, residues 151 to 165 (LKSGMIRVVQLTLLG) are extracellular. The chain crosses the membrane as a helical span at residues 166–186 (SILSNMLLVLGCAFFCGGLVF). Topologically, residues 187 to 197 (SQKEQVFDKGN) are cytoplasmic. A helical membrane pass occupies residues 198–218 (AVVNSGLLLMAVMGLLFPAVL). Topologically, residues 219 to 231 (HYTHSEVHAGSSE) are extracellular. A helical membrane pass occupies residues 232–252 (LALSRFSSCIMLVAYAAYLFF). Residues 253–286 (QLKSQPSSYTPLTEETNQNEETSDDDEDPEISKW) lie on the Cytoplasmic side of the membrane. Residues 287-307 (EAIIWLSILTAWVSLLSGYLV) form a helical membrane-spanning segment. At 308-311 (DAIE) the chain is on the extracellular side. Residues 312–332 (GASVSWKIPISFISVILLPIV) form a helical membrane-spanning segment. Residues 333–354 (GNAAEHAGAIMFAMKDKLDLSL) are Cytoplasmic-facing. Positions 333-368 (GNAAEHAGAIMFAMKDKLDLSLGVAIGSSIQISMFA) are cation selection. Residues 355–375 (GVAIGSSIQISMFAVPFCVVI) form a helical membrane-spanning segment. The Extracellular portion of the chain corresponds to 376 to 384 (GWMMGAQMD). A helical membrane pass occupies residues 385–405 (LNFQLFETATLFITVIVVAFF). Over 406-412 (LQEGTSN) the chain is Cytoplasmic. Residues 413 to 433 (YFKGLMLILCYLIVAASFFVH) traverse the membrane as a helical segment. At 434-441 (EDPHQDDI) the chain is on the extracellular side.

Belongs to the Ca(2+):cation antiporter (CaCA) (TC 2.A.19) family. Cation/proton exchanger (CAX) subfamily.

It is found in the vacuole membrane. Its function is as follows. Vacuolar cation/proton exchanger (CAX). Translocates Ca(2+) and other metal ions into vacuoles using the proton gradient formed by H(+)-ATPase and H(+)-pyrophosphatase. The protein is Vacuolar cation/proton exchanger 5 (CAX5) of Arabidopsis thaliana (Mouse-ear cress).